Here is a 70-residue protein sequence, read N- to C-terminus: Biotin carboxyl carrier protein of acetyl-CoA carboxylase (70 aa).

The Biotinyl-binding domain maps to 1–69 (GTVVAPMVGL…QDGIKLFALK (69 aa)). Lysine 35 carries the N6-biotinyllysine modification.

Its subcellular location is the plastid. It localises to the chloroplast. Its pathway is lipid metabolism; fatty acid biosynthesis. Its function is as follows. This protein is a component of the acetyl coenzyme A carboxylase complex; first, biotin carboxylase catalyzes the carboxylation of the carrier protein and then the transcarboxylase transfers the carboxyl group to form malonyl-CoA. In Solanum lycopersicum (Tomato), this protein is Biotin carboxyl carrier protein of acetyl-CoA carboxylase.